Here is a 72-residue protein sequence, read N- to C-terminus: Large ribosomal subunit protein bL31 (72 aa).

Zn(2+) contacts are provided by Cys16, Cys18, Cys37, and Cys40.

This sequence belongs to the bacterial ribosomal protein bL31 family. Type A subfamily. Part of the 50S ribosomal subunit. The cofactor is Zn(2+).

Binds the 23S rRNA. The polypeptide is Large ribosomal subunit protein bL31 (Pseudomonas fluorescens (strain Pf0-1)).